The chain runs to 189 residues: Potassium-transporting ATPase KdpC subunit (189 aa).

The chain crosses the membrane as a helical span at residues 6-26 (PAILLFIMFTIICGGIYPALV).

The protein belongs to the KdpC family. The system is composed of three essential subunits: KdpA, KdpB and KdpC.

It localises to the cell inner membrane. In terms of biological role, part of the high-affinity ATP-driven potassium transport (or Kdp) system, which catalyzes the hydrolysis of ATP coupled with the electrogenic transport of potassium into the cytoplasm. This subunit acts as a catalytic chaperone that increases the ATP-binding affinity of the ATP-hydrolyzing subunit KdpB by the formation of a transient KdpB/KdpC/ATP ternary complex. This Trichlorobacter lovleyi (strain ATCC BAA-1151 / DSM 17278 / SZ) (Geobacter lovleyi) protein is Potassium-transporting ATPase KdpC subunit.